We begin with the raw amino-acid sequence, 461 residues long: Photosystem II CP43 reaction center protein (461 aa).

Positions 1-2 are excised as a propeptide; that stretch reads ME. An N-acetylthreonine modification is found at threonine 3. A Phosphothreonine modification is found at threonine 3. A run of 5 helical transmembrane segments spans residues 57-81, 122-143, 166-188, 243-263, and 279-300; these read LFEVAHFVPQKPMYEQGLILLPHLA, LAGPDTLEESFRFFGYTWKRKK, KAMYGGGVYDTWWPGGGDVRSIT, RPSPWVVRTFVWSGEAYLSYS, and WFNNTVYPSEFYGPTGPEASQA. Glutamate 355 serves as a coordination point for [CaMn4O5] cluster. A helical transmembrane segment spans residues 435–459; sequence RARAAAIGFEKGIDRSREIARKLKP.

The protein belongs to the PsbB/PsbC family. PsbC subfamily. PSII is composed of 1 copy each of membrane proteins PsbA, PsbB, PsbC, PsbD, PsbE, PsbF, PsbH, PsbI, PsbJ, PsbK, PsbL, PsbM, PsbT, PsbY, PsbZ, Psb30/Ycf12, at least 3 peripheral proteins of the oxygen-evolving complex and a large number of cofactors. It forms dimeric complexes. Binds multiple chlorophylls and provides some of the ligands for the Ca-4Mn-5O cluster of the oxygen-evolving complex. It may also provide a ligand for a Cl- that is required for oxygen evolution. PSII binds additional chlorophylls, carotenoids and specific lipids. is required as a cofactor.

The protein localises to the plastid. It localises to the chloroplast thylakoid membrane. Functionally, one of the components of the core complex of photosystem II (PSII). It binds chlorophyll and helps catalyze the primary light-induced photochemical processes of PSII. PSII is a light-driven water:plastoquinone oxidoreductase, using light energy to abstract electrons from H(2)O, generating O(2) and a proton gradient subsequently used for ATP formation. The chain is Photosystem II CP43 reaction center protein from Euglena gracilis.